The primary structure comprises 105 residues: Large ribosomal subunit protein P1 (105 aa).

Position 1 is a blocked amino end (Met) (M1). Residues 65-76 (VAAPAGQQTQQA) are compositionally biased toward low complexity. The segment at 65-105 (VAAPAGQQTQQAAEKKEEKKEEEKKGPSEEEIGGGLSSLFG) is disordered. Residues 77-92 (AEKKEEKKEEEKKGPS) are compositionally biased toward basic and acidic residues.

It belongs to the eukaryotic ribosomal protein P1/P2 family. Part of the 50S ribosomal subunit. Homodimer, it forms part of the ribosomal stalk which helps the ribosome interact with GTP-bound translation factors. Forms a heptameric uL10/P0(P1)2(P1)2(P1)2 complex, where uL10/P0 forms an elongated spine to which the P1 dimers bind in a sequential fashion.

Its function is as follows. Forms part of the ribosomal stalk, playing a central role in the interaction of the ribosome with GTP-bound translation factors. In Sulfolobus acidocaldarius (strain ATCC 33909 / DSM 639 / JCM 8929 / NBRC 15157 / NCIMB 11770), this protein is Large ribosomal subunit protein P1.